The chain runs to 610 residues: Zinc metalloproteinase-disintegrin-like 3a (610 aa).

An N-terminal signal peptide occupies residues 1-19 (MIQVLLVTILAVFPYQGSS). Positions 20–188 (IILGSGNVND…KKASQLVVTA (169 aa)) are excised as a propeptide. One can recognise a Peptidase M12B domain in the interval 198–394 (RYVELVIVAD…YTPKCILNEP (197 aa)). Glutamate 201 lines the Ca(2+) pocket. Asparagine 217 carries an N-linked (GlcNAc...) asparagine glycan. Aspartate 285 lines the Ca(2+) pocket. 3 disulfide bridges follow: cysteine 309/cysteine 389, cysteine 349/cysteine 373, and cysteine 351/cysteine 356. Position 334 (histidine 334) interacts with Zn(2+). Glutamate 335 is a catalytic residue. Positions 338 and 344 each coordinate Zn(2+). 7 residues coordinate Ca(2+): cysteine 389, asparagine 392, valine 404, asparagine 407, glutamate 411, glutamate 414, and aspartate 417. Positions 402–488 (PPVCGNELLE…DCPTDDFHKN (87 aa)) constitute a Disintegrin domain. 14 disulfide bridges follow: cysteine 405/cysteine 434, cysteine 416/cysteine 429, cysteine 418/cysteine 424, cysteine 428/cysteine 451, cysteine 442/cysteine 448, cysteine 447/cysteine 473, cysteine 460/cysteine 480, cysteine 467/cysteine 499, cysteine 492/cysteine 504, cysteine 511/cysteine 561, cysteine 526/cysteine 572, cysteine 539/cysteine 549, cysteine 556/cysteine 598, and cysteine 592/cysteine 603. Positions 466–468 (ECD) match the D/ECD-tripeptide motif.

Belongs to the venom metalloproteinase (M12B) family. P-III subfamily. It depends on Zn(2+) as a cofactor. In terms of tissue distribution, expressed by the venom gland.

It localises to the secreted. Its function is as follows. Snake venom metalloproteinase that impairs hemostasis in the envenomed animal. The chain is Zinc metalloproteinase-disintegrin-like 3a from Crotalus adamanteus (Eastern diamondback rattlesnake).